Reading from the N-terminus, the 275-residue chain is Glutamate racemase (275 aa).

Residues 12 to 13 and 44 to 45 each bind substrate; these read DS and YG. C75 serves as the catalytic Proton donor/acceptor. Position 76–77 (76–77) interacts with substrate; sequence NT. The active-site Proton donor/acceptor is the C185. Residue 186 to 187 coordinates substrate; that stretch reads TH.

The protein belongs to the aspartate/glutamate racemases family.

It catalyses the reaction L-glutamate = D-glutamate. It functions in the pathway cell wall biogenesis; peptidoglycan biosynthesis. Provides the (R)-glutamate required for cell wall biosynthesis. This chain is Glutamate racemase, found in Mycobacterium avium (strain 104).